We begin with the raw amino-acid sequence, 1622 residues long: WD repeat-containing protein 97 (1622 aa).

WD repeat units follow at residues 187-233 (SEQG…RRLV), 290-329 (LHKTTISDLAYCEEVEAMVTASRDSTVKVWEADWQIRMVF), 331-370 (GHTGPVTAMTVLPNTTLVLSASQDGTLRTWDLQAAAQVGE), 552-592 (ELRC…TVFQ), 594-633 (EAHSPGPVVAIASTWNSIVSSGGDLTVKMWRVFPYAEESL), and 687-726 (DPTDHITGLCCCPTLKLYACSSLDCTVRIWTAENRLLRLL). 2 disordered regions span residues 1090–1112 (GEKPGEEGEEDKKEEEEEKEDEE) and 1453–1472 (LHPAGPAQLPGEPPPLEETD). Residues 1094-1118 (GEEGEEDKKEEEEEKEDEELDWALA) adopt a coiled-coil conformation. Positions 1096-1112 (EGEEDKKEEEEEKEDEE) are enriched in acidic residues.

This Homo sapiens (Human) protein is WD repeat-containing protein 97.